The primary structure comprises 498 residues: Ribosomal RNA small subunit methyltransferase G 2 (498 aa).

The segment at 1–230 is methyltransferase G; that stretch reads MRNGTIRYPG…FQRLGPPTRI (230 aa). Residues Gly-89, Met-94, and Arg-154 each contribute to the S-adenosyl-L-methionine site. Residues 231 to 498 form a methyltransferase TrmH family region; that stretch reads RKETAMKRHG…SQTKHSPAPA (268 aa).

It in the N-terminal section; belongs to the methyltransferase superfamily. RNA methyltransferase RsmG family. The protein in the C-terminal section; belongs to the class IV-like SAM-binding methyltransferase superfamily. RNA methyltransferase TrmH family.

It localises to the cytoplasm. The enzyme catalyses guanosine(527) in 16S rRNA + S-adenosyl-L-methionine = N(7)-methylguanosine(527) in 16S rRNA + S-adenosyl-L-homocysteine. Functionally, specifically methylates the N7 position of guanine in position 527 of 16S rRNA. The chain is Ribosomal RNA small subunit methyltransferase G 2 (rsmG2) from Syntrophobacter fumaroxidans (strain DSM 10017 / MPOB).